The chain runs to 453 residues: Protein FAM222A (453 aa).

The protein belongs to the FAM222 family.

In Mus musculus (Mouse), this protein is Protein FAM222A (Fam222a).